The primary structure comprises 351 residues: Photosystem II D2 protein (351 aa).

The helical transmembrane segment at Cys39 to Thr59 threads the bilayer. His116 serves as a coordination point for chlorophyll a. The chain crosses the membrane as a helical span at residues Gly123–Pro139. Pheophytin a-binding residues include Gln128 and Asn141. Residues Val151–Ser164 form a helical membrane-spanning segment. His196 is a binding site for chlorophyll a. The helical transmembrane segment at Gly206–Asp226 threads the bilayer. A plastoquinone contacts are provided by His213 and Phe260. His213 is a Fe cation binding site. Position 267 (His267) interacts with Fe cation. Residues Gly277–Arg293 form a helical membrane-spanning segment.

Belongs to the reaction center PufL/M/PsbA/D family. As to quaternary structure, PSII is composed of 1 copy each of membrane proteins PsbA, PsbB, PsbC, PsbD, PsbE, PsbF, PsbH, PsbI, PsbJ, PsbK, PsbL, PsbM, PsbT, PsbX, PsbY, PsbZ, Psb30/Ycf12, peripheral proteins PsbO, CyanoQ (PsbQ), PsbU, PsbV and a large number of cofactors. It forms dimeric complexes. The D1/D2 heterodimer binds P680, chlorophylls that are the primary electron donor of PSII, and subsequent electron acceptors. It shares a non-heme iron and each subunit binds pheophytin, quinone, additional chlorophylls, carotenoids and lipids. There is also a Cl(-1) ion associated with D1 and D2, which is required for oxygen evolution. The PSII complex binds additional chlorophylls, carotenoids and specific lipids. is required as a cofactor.

It localises to the cellular thylakoid membrane. The enzyme catalyses 2 a plastoquinone + 4 hnu + 2 H2O = 2 a plastoquinol + O2. In terms of biological role, photosystem II (PSII) is a light-driven water:plastoquinone oxidoreductase that uses light energy to abstract electrons from H(2)O, generating O(2) and a proton gradient subsequently used for ATP formation. It consists of a core antenna complex that captures photons, and an electron transfer chain that converts photonic excitation into a charge separation. The D1/D2 (PsbA/PsbD) reaction center heterodimer binds P680, the primary electron donor of PSII as well as several subsequent electron acceptors. D2 is needed for assembly of a stable PSII complex. In Nostoc punctiforme (strain ATCC 29133 / PCC 73102), this protein is Photosystem II D2 protein.